The following is a 286-amino-acid chain: MQNEPMFQVQVDESEDSEWNDILRAKGVIPERAPSPTAKLEEALEEAIAKQHENRLEDKDLSDLEELEDDEDEDFLEAYKIKRLNEIRKLQERSKFGEVFHINKPEYNKEVTLASQGKKYEGAQTNDNGEEDDGGVYVFVHLSLQSKLQSRILSHLFQSAACKFREIKFVEIPANRAIENYPESNCPTLIVYYRGEVIKNMITLLELGGNNSKMEDFEDFMVKVGAVAEGDNRLIMNRDDEESREERKLHYGEKKSIRSGIRGKFNVGIGGNDDGNINDDDDGFFD.

S35 and S62 each carry phosphoserine. A thioredoxin fold region spans residues 96 to 286 (FGEVFHINKP…INDDDDGFFD (191 aa)).

The protein belongs to the phosducin family. Interacts with the G protein beta-gamma subunit complex (STE4-STE18 complex). Interacts with CCT2; this interaction leads to inhibition of CCT complex mediated actin folding.

The protein resides in the cytoplasm. Its function is as follows. Essential for cell growth. Inhibits early G-protein signaling events following pheromone stimulation. Inhibits the folding activity of the chaperonin-containing T-complex (CCT) CCT2 which leads to inhibition of cytoskeletal actin folding. Plays a role in cell cycle progression in G1/S phase. The sequence is that of Phosducin-like protein 2 from Saccharomyces cerevisiae (strain ATCC 204508 / S288c) (Baker's yeast).